We begin with the raw amino-acid sequence, 266 residues long: MDELMGKTCSYFYPRPTLGSLSDKKALFGGYPTQEQVYLLESIGVEWFVDLTLGNEKRTTPYIIQNKEKYITFPIMDQRVPENIIEFVKFINKLVNIISGLTDCEKLYIHCKGGHGRSGLIAATLLCVMDEISPEKAIKETTLSHPQTKAQCNFLHYLFGSQNINNDSLLSPYSHHQVIIVCGKTETVFKSASDAVYYLLHNSSGKSDYFIRCVEFVLDNKFQQHPSCKQQLLQTGFRQLQCRLGQNCIGTICIKLRNKYYNNLEV.

The Tyrosine-protein phosphatase domain occupies 15-167 (RPTLGSLSDK…LFGSQNINND (153 aa)). The Phosphocysteine intermediate role is filled by Cys-111.

It belongs to the protein-tyrosine phosphatase family.

It catalyses the reaction O-phospho-L-tyrosyl-[protein] + H2O = L-tyrosyl-[protein] + phosphate. This chain is Putative tyrosine phosphatase 197R, found in Invertebrate iridescent virus 6 (IIV-6).